Here is a 1193-residue protein sequence, read N- to C-terminus: MAAPYRQPEEAVDDSEFIDDHHDHLRDTVHHRLRANSAIMQFQKILVANRGEIPIRIFRTAHELSLQTVAIFSHEDRLSMHRQKADEAYMIGHRGQYTPVGAYLAADEIVKIALEHGVHLIHPGYGFLSENADFARKVEKAGMVFVGPTPDTIDSLGDKVSARQLAIRCNVPVVPGTEGPVERYEEVKAFTDTYGFPIIIKAAFGGGGRGMRVVRNQADLRDSFERATSEARSAFGNGTVFVERFLDKPKHIEVQLLGDNHGNVVHLFERDCSVQRRHQKVVEVAPAKDLPTDVRDRILSDAVKLAKSVNYRNAGTAEFLVDQQNRHYFIEINPRIQVEHTITEEITGIDIVAAQIQIAAGATLEQLGLTQDRISTRGFAIQCRITTEDPSKGFSPDTGKIEVYRSAGGNGVRLDGGNGFAGAIITPHYDSMLVKCTCRGSTYEIARRKVVRALVEFRIRGVKTNIPFLTSLLSHPTFVDGNCWTTFIDDTPELFALVGSQNRAQKLLAYLGDVAVNGSSIKGQMGEPKFKGEIIKPKLLDAQGKPLDVSQPCTKGWKQIIDQEGPVAFAKAVRANKGCLIMDTTWRDAHQSLLATRVRTIDLLNIAHETSHALSNAYSLECWGGATFDVAMRFLYEDPWDRLRKMRKAVPNIPFQMLLRGANGVAYSSLPDNAIYHFCKNAKKCGVDIFRVFDALNDIDQLEVGIKAVHAAEGVVEATVCYSGDMLNPKKKYNLEYYLALVDKIVALKPHVLGIKDMAGVLKPQAARLLVGSIRERYPDLPIHVHTHDSAGTGVASMIACAQAGADAVDAATDSMSGMTSQPSIGAILASLEGTEHDPGLNSAHVRALDSYWAQLRLLYSPFEANLTGPDPEVYEHEIPGGQLTNLIFQASQLGLGQQWAETKKAYEVANDLLGDIVKVTPTSKVVGDLAQFIVSNKLSAQDVVDRAAELDFPGSVLEFLEGLMGQPFGGFPEPLRSRALRNRRKLDKRPGLYLEPLDLAAIKNQIREQFGSATEYDVASYAMYPKVFEDYKKFVQKYGDLSVLPTRYFLAKPEIGEEFHVELEKGKVLILKLLAIGPLSEQTGQREVFYEVNGEVRQVSIDDKKASIDNTARPKADVGDSSQVGAPMSGVVVEIRVHDGLEVKKGDPLAVLSAMKMEMVISAPHSGKVSGLLVKEGDSVDGQDLVCKITKA.

Residues 41 to 493 (QFQKILVANR…WTTFIDDTPE (453 aa)) enclose the Biotin carboxylation domain. ATP is bound by residues Lys-159, Glu-243, and His-278. Positions 163 to 360 (RQLAIRCNVP…IVAAQIQIAA (198 aa)) constitute an ATP-grasp domain. Arg-335 is a catalytic residue. The 269-residue stretch at 579–847 (CLIMDTTWRD…DPGLNSAHVR (269 aa)) folds into the Pyruvate carboxyltransferase domain. Substrate-binding positions include 587–591 (RDAHQ) and Arg-660. Asp-588 serves as a coordination point for a divalent metal cation. Lys-756, His-786, and His-788 together coordinate a divalent metal cation. Lys-756 is modified (N6-carboxylysine). Position 921 (Thr-921) interacts with substrate. The region spanning 1116-1191 (KADVGDSSQV…DGQDLVCKIT (76 aa)) is the Biotinyl-binding domain. At Lys-1157 the chain carries N6-biotinyllysine.

Biotin serves as cofactor. Requires Zn(2+) as cofactor.

It is found in the cytoplasm. It catalyses the reaction hydrogencarbonate + pyruvate + ATP = oxaloacetate + ADP + phosphate + H(+). It participates in carbohydrate biosynthesis; gluconeogenesis. Its function is as follows. Pyruvate carboxylase catalyzes a 2-step reaction, involving the ATP-dependent carboxylation of the covalently attached biotin in the first step and the transfer of the carboxyl group to pyruvate in the second. The sequence is that of Pyruvate carboxylase (pyc) from Aspergillus terreus.